Here is a 224-residue protein sequence, read N- to C-terminus: Cytidylate kinase (224 aa).

Position 11-19 (11-19 (GPAAAGKST)) interacts with ATP.

The protein belongs to the cytidylate kinase family. Type 1 subfamily.

The protein localises to the cytoplasm. It catalyses the reaction CMP + ATP = CDP + ADP. The enzyme catalyses dCMP + ATP = dCDP + ADP. This chain is Cytidylate kinase, found in Geobacillus thermodenitrificans (strain NG80-2).